The following is a 422-amino-acid chain: Serine hydroxymethyltransferase (422 aa).

(6S)-5,6,7,8-tetrahydrofolate is bound by residues Leu118 and 122–124; that span reads GHL. Lys227 carries the post-translational modification N6-(pyridoxal phosphate)lysine. Residue Glu242 coordinates (6S)-5,6,7,8-tetrahydrofolate.

This sequence belongs to the SHMT family. Homodimer. The cofactor is pyridoxal 5'-phosphate.

Its subcellular location is the cytoplasm. It catalyses the reaction (6R)-5,10-methylene-5,6,7,8-tetrahydrofolate + glycine + H2O = (6S)-5,6,7,8-tetrahydrofolate + L-serine. It participates in one-carbon metabolism; tetrahydrofolate interconversion. Its pathway is amino-acid biosynthesis; glycine biosynthesis; glycine from L-serine: step 1/1. In terms of biological role, catalyzes the reversible interconversion of serine and glycine with tetrahydrofolate (THF) serving as the one-carbon carrier. This reaction serves as the major source of one-carbon groups required for the biosynthesis of purines, thymidylate, methionine, and other important biomolecules. Also exhibits THF-independent aldolase activity toward beta-hydroxyamino acids, producing glycine and aldehydes, via a retro-aldol mechanism. The protein is Serine hydroxymethyltransferase of Sulfurihydrogenibium sp. (strain YO3AOP1).